The chain runs to 240 residues: MGRAFEYRRAAKEKRWDKMSKVFPKLAKAITLAAKDGGSEPDTNAKLRTAILNAKAQNMPKDNIDAAIKRASSKEGNLSEITYEGKANFGVLIIMECMTDNPTRTIANLKSYFNKTQGASIVPNGSLEFMFNRKSVFECSKSEVKNLKLSLEDLEFALIDYGLEELEEVGDRIIIRGDYNSFKLLNEGFESLKLPILKAGLQRIATTPIELNDEQMELTEKLLDRIEDDDDVVALYTNIE.

The protein belongs to the TACO1 family.

It is found in the cytoplasm. The polypeptide is Probable transcriptional regulatory protein HPP12_0160 (Helicobacter pylori (strain P12)).